Reading from the N-terminus, the 404-residue chain is N-acetylglucosamine-6-phosphate deacetylase (404 aa).

Glu-143 is an a divalent metal cation binding site. A substrate-binding site is contributed by 154–155; sequence AH. Positions 211 and 232 each coordinate a divalent metal cation. Substrate is bound by residues 235 to 236, Arg-243, and 269 to 272; these read NA and DGIH. Asp-294 functions as the Proton donor/acceptor in the catalytic mechanism. Residue 328–330 coordinates substrate; it reads LSG.

Belongs to the metallo-dependent hydrolases superfamily. NagA family. The cofactor is a divalent metal cation.

It carries out the reaction N-acetyl-D-glucosamine 6-phosphate + H2O = D-glucosamine 6-phosphate + acetate. It participates in amino-sugar metabolism; N-acetylneuraminate degradation. Its function is as follows. Hydrolyzes the N-glycolyl group from N-glycolylglucosamine 6-phosphate (GlcNGc-6-P) in the N-glycolylneuraminic acid (Neu5Gc) degradation pathway. The sequence is that of N-acetylglucosamine-6-phosphate deacetylase (amdhd2) from Danio rerio (Zebrafish).